A 98-amino-acid polypeptide reads, in one-letter code: Histone H4-1 (98 aa).

A compositionally biased stretch (gly residues) spans methionine 1–lysine 14. The segment at methionine 1 to arginine 20 is disordered.

Belongs to the histone H4 family. As to quaternary structure, the nucleosome is a histone octamer containing two molecules each of H2A, H2B, H3 and H4 assembled in one H3-H4 heterotetramer and two H2A-H2B heterodimers. The octamer wraps approximately 147 bp of DNA.

Its subcellular location is the nucleus. It localises to the chromosome. Core component of nucleosome. Nucleosomes wrap and compact DNA into chromatin, limiting DNA accessibility to the cellular machineries which require DNA as a template. Histones thereby play a central role in transcription regulation, DNA repair, DNA replication and chromosomal stability. DNA accessibility is regulated via a complex set of post-translational modifications of histones, also called histone code, and nucleosome remodeling. In Blepharisma japonicum, this protein is Histone H4-1.